Here is a 435-residue protein sequence, read N- to C-terminus: Homoserine dehydrogenase (435 aa).

3 residues coordinate NADPH: Thr13, Val14, and Lys104. Val14 lines the NAD(+) pocket. Residues Val14 and Lys104 each contribute to the NADP(+) site. 4 residues coordinate Na(+): Glu128, Val131, Gly133, and Ile135. Gly186 and Glu189 together coordinate NADP(+). Residues Glu189 and Asp200 each contribute to the L-homoserine site. The active-site Proton donor is the Lys204. Gly301 is a binding site for NADPH. Gly301 is an NAD(+) binding site. Gly301 is an NADP(+) binding site. The 76-residue stretch at 354-429 (YLRVQAKDEP…CVEKPITMIR (76 aa)) folds into the ACT domain.

Belongs to the homoserine dehydrogenase family. As to quaternary structure, homotetramer. It depends on a metal cation as a cofactor.

The enzyme catalyses L-homoserine + NAD(+) = L-aspartate 4-semialdehyde + NADH + H(+). It functions in the pathway amino-acid biosynthesis; L-methionine biosynthesis via de novo pathway; L-homoserine from L-aspartate: step 3/3. It participates in amino-acid biosynthesis; L-threonine biosynthesis; L-threonine from L-aspartate: step 3/5. Neither NaCl nor KCl increase the activity. L-threonine and L-serine do not markedly inhibit the oxidation activity. In terms of biological role, catalyzes the conversion of L-aspartate-beta-semialdehyde (L-Asa) to L-homoserine (L-Hse), the third step in the biosynthesis of threonine and methionine from aspartate. Is highly specific for NAD(+), and displays an approximate 479-fold (kcat/Km) preference for NAD(+) over NADP(+). The sequence is that of Homoserine dehydrogenase from Neisseria gonorrhoeae (strain ATCC 700825 / FA 1090).